We begin with the raw amino-acid sequence, 1030 residues long: Protein KRBA1 (1030 aa).

5 disordered regions span residues 27-56 (EPGR…GQPR), 80-208 (KGAM…NSPL), 225-255 (HPET…GSPP), 281-505 (EAQD…GLEN), and 634-788 (GGPS…PASS). Ser-101 is subject to Phosphoserine. Over residues 102 to 114 (PEAAAAREPCPLR) the composition is skewed to low complexity. Residues 124–143 (PTSQPHLATTPTDSSCSSGP) are compositionally biased toward polar residues. Positions 157-168 (TADKPWPTRKEG) are enriched in basic and acidic residues. Phosphoserine is present on residues Ser-177, Ser-182, Ser-184, Ser-229, Ser-253, and Ser-355. Low complexity predominate over residues 372–389 (PEAQAASASSSPLEALEA). Polar residues predominate over residues 397 to 418 (NGSSPSQLPPTSCSQNPQPGDS). Residues 419-437 (RSQKPELQPHRSHSEEATR) are compositionally biased toward basic and acidic residues. 2 stretches are compositionally biased toward low complexity: residues 485–502 (QGQH…PLQG) and 642–651 (PGSSSSFSGS). The span at 654–674 (EDPRPEPDLWKPLPQERDRLP) shows a compositional bias: basic and acidic residues. Residues 689-698 (TPAGSSGGSP) are compositionally biased toward gly residues. The span at 760–784 (QGPPELPSESPPPELPPPEAAPPVL) shows a compositional bias: pro residues. Residues 799–832 (LQQELHSLGAALAEKLDRLATALAGLAQEVATMR) are a coiled coil. Over residues 870 to 887 (RHLPYWRQKGPTRPKPKI) the composition is skewed to basic residues. The tract at residues 870–1030 (RHLPYWRQKG…EHRDPRWGAH (161 aa)) is disordered. Pro residues predominate over residues 913 to 923 (PLPPDAPPAEP). Composition is skewed to low complexity over residues 929–953 (SSSQ…LLAH) and 966–984 (PAAL…ADAD). A compositionally biased stretch (basic and acidic residues) spans 1019–1030 (GGEHRDPRWGAH).

In terms of tissue distribution, expressed in brain (cerebellum).

This Homo sapiens (Human) protein is Protein KRBA1 (KRBA1).